The following is a 267-amino-acid chain: NADP-dependent mannitol dehydrogenase (267 aa).

NADP(+)-binding residues include asparagine 108 and lysine 141. The Proton donor role is filled by serine 160. Tyrosine 175, lysine 179, isoleucine 207, and threonine 209 together coordinate NADP(+). The Proton acceptor role is filled by tyrosine 175. Lysine 179 acts as the Lowers pKa of active site Tyr in catalysis.

This sequence belongs to the short-chain dehydrogenases/reductases (SDR) family. In terms of assembly, exists as monomer, dimer and tetramer.

It carries out the reaction D-mannitol + NADP(+) = D-fructose + NADPH + H(+). Functionally, interconverts D-mannitol and D-fructose. Not active with fructose 6-phosphate or NADH. The chain is NADP-dependent mannitol dehydrogenase from Davidiella tassiana (Mycosphaerella tassiana).